We begin with the raw amino-acid sequence, 108 residues long: ATP synthase peripheral stalk subunit F6, mitochondrial (108 aa).

A mitochondrion-targeting transit peptide spans 1 to 32; it reads MILQRLFRFSSVIRSAVSVHLRRNIGVTAVAF. N6-acetyllysine occurs at positions 41 and 46. The residue at position 65 (serine 65) is a Phosphoserine. Lysine 79 is modified (N6-acetyllysine). N6-acetyllysine; alternate is present on residues lysine 94 and lysine 99. N6-succinyllysine; alternate occurs at positions 94 and 99. Lysine 105 bears the N6-acetyllysine mark.

This sequence belongs to the eukaryotic ATPase subunit F6 family. Component of the ATP synthase complex composed at least of ATP5F1A/subunit alpha, ATP5F1B/subunit beta, ATP5MC1/subunit c (homooctomer), MT-ATP6/subunit a, MT-ATP8/subunit 8, ATP5ME/subunit e, ATP5MF/subunit f, ATP5MG/subunit g, ATP5MK/subunit k, ATP5MJ/subunit j, ATP5F1C/subunit gamma, ATP5F1D/subunit delta, ATP5F1E/subunit epsilon, ATP5PF/subunit F6, ATP5PB/subunit b, ATP5PD/subunit d, ATP5PO/subunit OSCP. ATP synthase complex consists of a soluble F(1) head domain (subunits alpha(3) and beta(3)) - the catalytic core - and a membrane F(0) domain - the membrane proton channel (subunits c, a, 8, e, f, g, k and j). These two domains are linked by a central stalk (subunits gamma, delta, and epsilon) rotating inside the F1 region and a stationary peripheral stalk (subunits F6, b, d, and OSCP).

It localises to the mitochondrion. Its subcellular location is the mitochondrion inner membrane. In terms of biological role, subunit F6, of the mitochondrial membrane ATP synthase complex (F(1)F(0) ATP synthase or Complex V) that produces ATP from ADP in the presence of a proton gradient across the membrane which is generated by electron transport complexes of the respiratory chain. ATP synthase complex consist of a soluble F(1) head domain - the catalytic core - and a membrane F(1) domain - the membrane proton channel. These two domains are linked by a central stalk rotating inside the F(1) region and a stationary peripheral stalk. During catalysis, ATP synthesis in the catalytic domain of F(1) is coupled via a rotary mechanism of the central stalk subunits to proton translocation. In vivo, can only synthesize ATP although its ATP hydrolase activity can be activated artificially in vitro. Part of the complex F(0) domain. Part of the complex F(0) domain and the peripheric stalk, which acts as a stator to hold the catalytic alpha(3)beta(3) subcomplex and subunit a/ATP6 static relative to the rotary elements. The protein is ATP synthase peripheral stalk subunit F6, mitochondrial of Homo sapiens (Human).